Reading from the N-terminus, the 196-residue chain is uncharacterized protein (196 aa).

This is an uncharacterized protein from Saccharolobus islandicus (Sulfolobus islandicus).